The primary structure comprises 503 residues: Glucosaminyl-phosphatidylinositol-acyltransferase PIGW (503 aa).

The Lumenal portion of the chain corresponds to 1 to 21 (MSQKQLKEAFVRNLSGTSVLE). Asn13 carries N-linked (GlcNAc...) asparagine glycosylation. A helical membrane pass occupies residues 22 to 42 (VTQGLCFPAFCILCRGLWIIF). At 43–48 (SQHVCS) the chain is on the cytoplasmic side. The chain crosses the membrane as a helical span at residues 49–71 (FSNTWSTRFLMDFVVLIVPLVIT). The Lumenal portion of the chain corresponds to 72–74 (LTV). The chain crosses the membrane as a helical span at residues 75–97 (LSSFILLENLTVIVWGAWLLYQI). Residues 98 to 131 (YHRRTCYAKVPVQKVFANFLKISLESEYNPAITC) lie on the Cytoplasmic side of the membrane. The chain crosses the membrane as a helical span at residues 132–152 (YRVINSVFTAIAILAVDFPLF). Residues 153–160 (PRRFAKTE) lie on the Lumenal side of the membrane. A helical transmembrane segment spans residues 161–181 (LYGTGAMDFGVGGFIFGAAMV). Residues 182-201 (CPEVRRKSIEESRFNYLRKS) are Cytoplasmic-facing. Residues 202 to 222 (LYSVWPLVFLGMGRLVIIKSI) form a helical membrane-spanning segment. Residues 223 to 236 (GYQEHSTEYGIHWN) lie on the Lumenal side of the membrane. Residues 237–257 (FFFTIIVVRLVTSLLLIIFPL) form a helical membrane-spanning segment. The Cytoplasmic portion of the chain corresponds to 258–259 (NK). Residues 260–280 (SWIVAVSITVVYQLALDYTPL) form a helical membrane-spanning segment. At 281–304 (KRILLYGTDGSGTRVGFLNANREG) the chain is on the lumenal side. Residues 305–325 (IISTLGYVTIHMAGVQTGLYV) traverse the membrane as a helical segment. Topologically, residues 326–339 (LKGRAQVRDWIKAT) are cytoplasmic. Residues 340 to 360 (CWVFSVAVGFFISLHIVQVNI) traverse the membrane as a helical segment. Topologically, residues 361-380 (EAVSRRMANLAFCLWVVASS) are lumenal. Residues 381-401 (LMLLSCLLLSGIILSFAQFLI) traverse the membrane as a helical segment. Residues 402–447 (KGSLVPCSWKLIQSPTTHKNHSESLILEAEKNQPSLCLITALNRNQ) are Cytoplasmic-facing. Ser415 carries the post-translational modification Phosphoserine. A helical transmembrane segment spans residues 448 to 468 (LFFFLLSNITTGLINLTMDTL). The Lumenal portion of the chain corresponds to 469-472 (HTGA). A helical transmembrane segment spans residues 473 to 493 (LWTLVVLSIYMFTNCLVIYVL). Residues 494–503 (DLQGKTIKFW) lie on the Cytoplasmic side of the membrane.

This sequence belongs to the PIGW family.

It localises to the endoplasmic reticulum membrane. It functions in the pathway glycolipid biosynthesis; glycosylphosphatidylinositol-anchor biosynthesis. Functionally, acyltransferase that catalyzes the acyl transfer from an acyl-CoA at the 2-OH position of the inositol ring of glucosaminyl phosphatidylinositol (GlcN-PI) to generate GlcN-(acyl)PI and participates in the fourth step of GPI-anchor biosynthesi. Required for the transport of GPI-anchored proteins to the plasma membrane. Acetylation during GPI-anchor biosynthesis is not essential for the subsequent mannosylation and is usually removed soon after the attachment of GPIs to proteins. This is Glucosaminyl-phosphatidylinositol-acyltransferase PIGW from Mus musculus (Mouse).